The sequence spans 284 residues: 2-dehydro-3-deoxyphosphooctonate aldolase (284 aa).

Belongs to the KdsA family.

The protein localises to the cytoplasm. The catalysed reaction is D-arabinose 5-phosphate + phosphoenolpyruvate + H2O = 3-deoxy-alpha-D-manno-2-octulosonate-8-phosphate + phosphate. It participates in carbohydrate biosynthesis; 3-deoxy-D-manno-octulosonate biosynthesis; 3-deoxy-D-manno-octulosonate from D-ribulose 5-phosphate: step 2/3. The protein operates within bacterial outer membrane biogenesis; lipopolysaccharide biosynthesis. The sequence is that of 2-dehydro-3-deoxyphosphooctonate aldolase from Burkholderia mallei (strain NCTC 10247).